The chain runs to 479 residues: uncharacterized protein (479 aa).

The segment at 180–203 is disordered; the sequence is LGGEHSDSTNTELANPSSTTTRIT. Residues 187–202 show a composition bias toward polar residues; it reads STNTELANPSSTTTRI. Residues 240 to 462 enclose the PE-PPE domain; sequence PGTTPEVVSY…LKPLVDAGYS (223 aa).

It belongs to the mycobacterial PPE family.

This is an uncharacterized protein from Mycobacterium tuberculosis (strain CDC 1551 / Oshkosh).